Here is a 1605-residue protein sequence, read N- to C-terminus: GTPase-activating protein pac-1 (1605 aa).

The tract at residues 1–574 (MEEHHRRLHV…QRFIALFNSS (574 aa)) is required for localization to adherens junctions. 3 disordered regions span residues 293–430 (QRHP…ISTS), 529–556 (MRSGGASSATTTTTSNSGQQTSRSLNAP), and 574–593 (SKTSDGSGEHKKSRMKRSRT). Positions 323-334 (SKEDPSEDTGHD) are enriched in basic and acidic residues. Composition is skewed to low complexity over residues 353–365 (RNASLRNRQSSRS), 420–430 (TTSSTSSISTS), and 530–552 (RSGGASSATTTTTSNSGQQTSRS). In terms of domain architecture, PH spans 599–726 (RFALPGTILQ…WISVLQSSSE (128 aa)). Composition is skewed to polar residues over residues 728–745 (GIATGSSVDENELSTTGR) and 846–855 (KNSQLQSPTA). Disordered stretches follow at residues 728–752 (GIATGSSVDENELSTTGRHNNNAVS) and 846–942 (KNSQ…AGAP). Residues 868-879 (SSSQTMATTSSS) are compositionally biased toward low complexity. A compositionally biased stretch (basic residues) spans 908–917 (SGRKWKKSKA). Positions 928-941 (GSSSGSQQQGAAGA) are enriched in low complexity. In terms of domain architecture, Rho-GAP spans 948–1146 (VRIADCPTGS…TLIHYNLWMF (199 aa)). 5 disordered regions span residues 1152–1176 (TEDAVPEQHPADGQNPLEPGGYGVG), 1207–1258 (EGKG…AASV), 1277–1339 (SRQT…RRKR), 1438–1533 (TSDY…ARRH), and 1554–1605 (GIRK…DELL). A compositionally biased stretch (basic residues) spans 1211–1229 (QKIKNMLRRNSRRDKSKSK). 2 stretches are compositionally biased toward polar residues: residues 1244 to 1257 (GWTQPTPSNTSAAS) and 1278 to 1300 (RQTVSPQMTSGSADGASSTRLDQ). A compositionally biased stretch (low complexity) spans 1301–1312 (SPSLESSLGSLP). Residues 1438–1453 (TSDYSTTSSAPLSTNP) are compositionally biased toward polar residues. Residues 1461–1476 (DQPNSSSDYASSDPSP) show a composition bias toward low complexity. Composition is skewed to polar residues over residues 1480–1493 (NPSTSPASRPSNLA) and 1500–1515 (HATSSSGQSHQPMSRS). The segment covering 1558–1575 (SSPDVSRDEVSDDEKNHQ) has biased composition (basic and acidic residues).

As to quaternary structure, associated with the catenin-cadherin complex consisting of hmr-1, hmp-1 and hmp-2; this is mediated by interaction with picc-1.

It localises to the cytoplasm. It is found in the cell junction. Its subcellular location is the adherens junction. In terms of biological role, GTPase-activating protein for members of the Rho subfamily including Rac1, RhoA and cdc42 and other Ras-related subfamilies including let-60. Mediates radial (inner-outer) polarity and gastrulation by excluding par-6 from contacted cell surfaces; acts by inactivating cdc42 at inner cell surfaces which limits active cdc42 to outer cell surfaces devoid of cell-cell contacts, where cdc42 can bind and recruit par-6. Required for blastomere polarization. This is GTPase-activating protein pac-1 (pac-1) from Caenorhabditis elegans.